We begin with the raw amino-acid sequence, 161 residues long: Type II secretion system protein M (161 aa).

Over 1–16 (MNELRRRWQVMSQRER) the chain is Cytoplasmic. The helical transmembrane segment at 17 to 37 (LMALACGGLVVLCLLYYLIWA) threads the bilayer. Over 38–161 (PWQESVRQWQ…VTRLSLERVL (124 aa)) the chain is Periplasmic.

Belongs to the GSP M family. In terms of assembly, type II secretion system is composed of four main components: the outer membrane complex, the inner membrane complex, the cytoplasmic secretion ATPase and the periplasm-spanning pseudopilus. Forms homodimers. Interacts with OutL/GspL. Interacts with OutE/GspE and OutF/GspF.

It localises to the cell inner membrane. Functionally, inner membrane component of the type II secretion system required for the energy-dependent secretion of extracellular factors such as proteases and toxins from the periplasm. Plays a role in the complex assembly and recruits OutL resulting in a stable complex in the inner membrane. Provides thus a link between the energy-providing OutE protein in the cytoplasm and the rest of the T2SS machinery. In Dickeya chrysanthemi (Pectobacterium chrysanthemi), this protein is Type II secretion system protein M (outM).